The chain runs to 33 residues: Beta-amanitin proprotein (33 aa).

A propeptide spanning residues 1 to 10 is cleaved from the precursor; that stretch reads MSDINATRLP. Residues 11 to 18 constitute a cross-link (cyclopeptide (Ile-Pro)); sequence IWGIGCDP. The segment at residues 12–16 is a cross-link (2'-cysteinyl-6'-hydroxytryptophan sulfoxide (Trp-Cys)); the sequence is WGIGC. The propeptide occupies 19–33; that stretch reads CVGDEVTALLTRGEA.

It belongs to the MSDIN fungal toxin family. Post-translationally, processed by the macrocyclase-peptidase enzyme POPB to yield a toxic cyclic decapeptide. POPB first removes 10 residues from the N-terminus. Conformational trapping of the remaining peptide forces the enzyme to release this intermediate rather than proceed to macrocyclization. The enzyme rebinds the remaining peptide in a different conformation and catalyzes macrocyclization of the N-terminal 8 residues.

Toxin belonging to the bicyclic octapeptides amatoxins that acts by binding non-competitively to RNA polymerase II and greatly slowing the elongation of transcripts from target promoters. The chain is Beta-amanitin proprotein from Amanita fuligineoides.